Reading from the N-terminus, the 143-residue chain is Cold shock domain-containing protein CG9705 (143 aa).

Positions 1–30 are disordered; the sequence is MTEPRTPEKLLAAKPPVLHHNSHSPNASLQ. S22, S24, S28, and S33 each carry phosphoserine. The 68-residue stretch at 54–121 folds into the CSD domain; the sequence is VVTGMVKSFS…KHQAVHVQIS (68 aa). Phosphoserine occurs at positions 139 and 140.

The protein is Cold shock domain-containing protein CG9705 of Drosophila melanogaster (Fruit fly).